Consider the following 68-residue polypeptide: Conotoxin Vx2 (68 aa).

The signal sequence occupies residues 1 to 20; it reads MMSKLGVLVTICLLLFPLTA. The propeptide occupies 21-47; sequence LPLDGDQPADHPAKRTQDHNLASPISA. 3 disulfide bridges follow: cysteine 55/cysteine 68, cysteine 56/cysteine 61, and cysteine 57/cysteine 65.

This sequence belongs to the conotoxin M superfamily. In terms of tissue distribution, expressed by the venom duct.

It is found in the secreted. Its function is as follows. In vivo, elicits a series of symptoms, such as being sedative, tail stiffening and twisted jumping, when injected intracranially into mice. This Conus vexillum (Flag cone) protein is Conotoxin Vx2.